Consider the following 374-residue polypeptide: MKRQRIVIKIGSSSLTTKQGALDLEKLEGYVRAIVNLRKAGHEVILISSGAVAAGFSRLGYPVRPTTMAGKQAAAAVGQALLMQHYMERFHQHGIIAAQLLLTRKDFQNQTQYTNAYSALMELLKRGALPIINENDSTSIAELTFGDNDMLSALVSGLIHAHTLCILTDVNGLYDANPKTHPNAKRYQYLPTIPDEMLQMGGEAGSNVGTGGMKSKVAAAQTALSLGVDVFIGKASGEHALLDILSGKGDGTYVGNTGDLMEGKTKQWIRLHSPVSGVVRIDQGAERAIMNEGKSLLPAGVTSVHGTFQAGDVVHIWNEQNKVIAKGQVTLSSEQLRKVQGRKSDEAKQLIPLVRDEVVHRDQLVIQEKELNES.

K9 is an ATP binding site. Residues S49, D136, and N148 each coordinate substrate. Residues 168-169 (TD) and 210-216 (TGGMKSK) each bind ATP. The PUA domain occupies 276 to 354 (SGVVRIDQGA…DEAKQLIPLV (79 aa)).

It belongs to the glutamate 5-kinase family.

The protein localises to the cytoplasm. The catalysed reaction is L-glutamate + ATP = L-glutamyl 5-phosphate + ADP. The protein operates within amino-acid biosynthesis; L-proline biosynthesis; L-glutamate 5-semialdehyde from L-glutamate: step 1/2. In terms of biological role, catalyzes the transfer of a phosphate group to glutamate to form L-glutamate 5-phosphate. The chain is Glutamate 5-kinase from Halalkalibacterium halodurans (strain ATCC BAA-125 / DSM 18197 / FERM 7344 / JCM 9153 / C-125) (Bacillus halodurans).